A 463-amino-acid chain; its full sequence is Toxin CaTX-A (463 aa).

The signal sequence occupies residues 1–18 (MSRGYSLHLVLFLVLSTA).

This sequence belongs to the jellyfish toxin family. Type II subfamily. Oligomer. Contains disulfide bonds. In terms of tissue distribution, it is suggested that CaTX-B is synthesized in the tentacle, is modified (become CaTX-A) and then migrates to the nematocyst.

The protein localises to the secreted. The protein resides in the nematocyst. Its subcellular location is the target cell membrane. In terms of biological role, has potent hemolytic activity. Is lethal to crayfish. Causes cutaneous inflammation in humans. May act as a pore-forming toxin, disrupting normal transmembrane ion concentration gradients in susceptible cells. The sequence is that of Toxin CaTX-A from Carybdea alata (Hawaiian box jellyfish).